The sequence spans 444 residues: Type VII secretion system protein EssB (444 aa).

Residues 1–229 (MVKNHDPKNE…RKVGHTVFKW (229 aa)) lie on the Cytoplasmic side of the membrane. A helical membrane pass occupies residues 230-250 (VAIGMTTLSVLLIAFLAFLYF). Residues 251 to 444 (SVMKHNERIE…EKRQEAERKK (194 aa)) are Extracellular-facing. A disordered region spans residues 366 to 444 (KNNGDLSNDK…EKRQEAERKK (79 aa)). A compositionally biased stretch (basic and acidic residues) spans 372–444 (SNDKRSEETK…EKRQEAERKK (73 aa)). A coiled-coil region spans residues 387-443 (LQDILDKEKQVKDEKAKSEEEKAKAKDEKLKQQEENEKKQKEQAQKDKEKRQEAERK).

Belongs to the EssB family.

It localises to the cell membrane. Functionally, component of the type VII secretion system (Ess). Required for the secretion of EsxA. This chain is Type VII secretion system protein EssB, found in Staphylococcus aureus (strain MRSA252).